A 31-amino-acid polypeptide reads, in one-letter code: PTEN upstream open reading frame MP31 (31 aa).

Interacts with lactate dehydrogenases LDHA and LDHB; interaction with mitochondrial LDH leads to inhibition of lactate dehydrogenase activity, preventing conversion of lactate to pyruvate. In terms of tissue distribution, expressed in brain (at protein level). Expressed at lower levels in glioblastomas than in normal brain tissue (at protein level).

The protein localises to the mitochondrion. Its function is as follows. Inhibits lactate dehydrogenase (LDH)-mediated conversion of lactate to pyruvate in mitochondria by competing with mitochondrial LDH for binding to NAD(+). Also inhibits cellular lactate utilization. The protein is PTEN upstream open reading frame MP31 of Homo sapiens (Human).